A 433-amino-acid chain; its full sequence is Poly(A) ribonuclease POP2 (433 aa).

N-acetylmethionine is present on Met1. A disordered region spans residues 78–98 (LLTQQQQQQQQQQQPFNIGTP). Over residues 81 to 91 (QQQQQQQQQQQ) the composition is skewed to low complexity. At Thr97 the chain carries Phosphothreonine; by YAK1. A divalent metal cation contacts are provided by Ser188, Glu190, Asp310, and Gln394.

The protein belongs to the CAF1 family. In terms of assembly, subunit of the 1.0 MDa CCR4-NOT core complex that contains CCR4, CAF1, NOT1, NOT2, NOT3, NOT4, NOT5, CAF40 and CAF130. In the complex interacts with NOT1. The core complex probably is part of a less characterized 1.9 MDa CCR4-NOT complex. Requires Mg(2+) as cofactor.

It is found in the cytoplasm. The protein resides in the nucleus. It carries out the reaction Exonucleolytic cleavage of poly(A) to 5'-AMP.. Acts as a probably catalytic component of the CCR4-NOT core complex, which in the nucleus seems to be a general transcription factor, and in the cytoplasm the major mRNA deadenylase involved in mRNA turnover. In vitro, POP2 has 3'-exoribonuclease activity with a preference for poly(A) RNAs, but also degrades poly(U) and poly(C) RNAs. Is part of a glucose-sensing system involved in growth control in response to glucose availability. In Saccharomyces cerevisiae (strain ATCC 204508 / S288c) (Baker's yeast), this protein is Poly(A) ribonuclease POP2 (POP2).